A 1253-amino-acid chain; its full sequence is Myosin heavy chain 95F (1253 aa).

Residues 3 to 54 (EDTQLVWVRDAAEGYIQGRITEIGAKEFEVTPTDRKYPKRTCHFDDIHSSCD) form the Myosin N-terminal SH3-like domain. A Myosin motor domain is found at 57–766 (QDHDDNCELM…KFVEFDRIMR (710 aa)). 151-158 (GESGAGKT) provides a ligand contact to ATP. Residues 647-666 (GELMEKLEQNGTNFIRCIKP) are actin-binding. Positions 808-837 (RNKCVLIAQRIARGFLARKQHRPRYQGIGK) constitute an IQ domain. Residues 900–1022 (ANMNKLTVDL…LRLANESNGQ (123 aa)) are a coiled coil. The segment at 1187–1193 (PILLVAG) is hydrophobic region. Positions 1233 to 1253 (AYKNLGAAKPNGPAAAMQKQQ) are disordered.

The protein belongs to the TRAFAC class myosin-kinesin ATPase superfamily. Myosin family. Isoform B is present at a higher level in the head and gonads than in the thoraxes. Isoform 145 kDa is found only in the head. CLIP-190 and jar are coexpressed at several times in development and in a number of tissues, including embryonic axonal neuron processes and posterior pole.

The protein resides in the cytoplasm. Its subcellular location is the cytoskeleton. Myosin is a protein that binds to actin and has ATPase activity that is activated by actin. Together CLIP-190 and jar may coordinate the interaction between the actin and microtubule cytoskeleton. May link endocytic vesicles to microtubules and may be involved in transport in the early embryo and in the dynamic process of dorsal closure. It is believed that its function changes during the life cycle. In Drosophila melanogaster (Fruit fly), this protein is Myosin heavy chain 95F (jar).